Reading from the N-terminus, the 355-residue chain is Guanine nucleotide-binding protein subunit alpha-14 (355 aa).

The G-alpha domain occupies 34–355; sequence RELKLLLLGT…QLNLREFNLV (322 aa). The G1 motif stretch occupies residues 37-50; it reads KLLLLGTGESGKST. GTP is bound by residues 42–49, 176–182, 201–205, 270–273, and A327; these read GTGESGKS, LRVRVPT, DVGGQ, and NKKD. S49 and T182 together coordinate Mg(2+). The interval 174–182 is G2 motif; it reads DVLRVRVPT. Residues 197–206 are G3 motif; it reads FRMVDVGGQR. The interval 266-273 is G4 motif; the sequence is ILFLNKKD. Residues 325–330 are G5 motif; the sequence is TCATDT.

Belongs to the G-alpha family. G(q) subfamily. As to quaternary structure, g proteins are composed of 3 units; alpha, beta and gamma. The alpha chain contains the guanine nucleotide binding site.

Guanine nucleotide-binding proteins (G proteins) are involved as modulators or transducers in various transmembrane signaling systems. The chain is Guanine nucleotide-binding protein subunit alpha-14 (GNA14) from Bos taurus (Bovine).